The sequence spans 208 residues: ATP-dependent Clp protease proteolytic subunit (208 aa).

The active-site Nucleophile is the Ser-98. The active site involves His-123.

Belongs to the peptidase S14 family. In terms of assembly, fourteen ClpP subunits assemble into 2 heptameric rings which stack back to back to give a disk-like structure with a central cavity, resembling the structure of eukaryotic proteasomes.

Its subcellular location is the cytoplasm. It carries out the reaction Hydrolysis of proteins to small peptides in the presence of ATP and magnesium. alpha-casein is the usual test substrate. In the absence of ATP, only oligopeptides shorter than five residues are hydrolyzed (such as succinyl-Leu-Tyr-|-NHMec, and Leu-Tyr-Leu-|-Tyr-Trp, in which cleavage of the -Tyr-|-Leu- and -Tyr-|-Trp bonds also occurs).. Functionally, cleaves peptides in various proteins in a process that requires ATP hydrolysis. Has a chymotrypsin-like activity. Plays a major role in the degradation of misfolded proteins. This chain is ATP-dependent Clp protease proteolytic subunit, found in Wolbachia pipientis subsp. Culex pipiens (strain wPip).